The following is a 499-amino-acid chain: Phenylalanine--tRNA ligase alpha subunit (499 aa).

Residues Thr-342, 381 to 383 (QID), and Phe-422 each bind L-phenylalanine. Glu-424 is a Mg(2+) binding site. Phe-447 serves as a coordination point for L-phenylalanine.

Belongs to the class-II aminoacyl-tRNA synthetase family. Phe-tRNA synthetase alpha subunit type 2 subfamily. As to quaternary structure, tetramer of two alpha and two beta subunits. Mg(2+) serves as cofactor.

The protein localises to the cytoplasm. The enzyme catalyses tRNA(Phe) + L-phenylalanine + ATP = L-phenylalanyl-tRNA(Phe) + AMP + diphosphate + H(+). In Pyrococcus horikoshii (strain ATCC 700860 / DSM 12428 / JCM 9974 / NBRC 100139 / OT-3), this protein is Phenylalanine--tRNA ligase alpha subunit.